The sequence spans 554 residues: Membrane protein insertase YidC (554 aa).

5 helical membrane-spanning segments follow: residues 7-24 (VLWV…DNWQ), 362-382 (VVGN…AVFF), 436-456 (LPVV…LASV), 475-495 (PFFI…SLNP), and 510-530 (PIAF…YYVV).

Belongs to the OXA1/ALB3/YidC family. Type 1 subfamily. As to quaternary structure, interacts with the Sec translocase complex via SecD. Specifically interacts with transmembrane segments of nascent integral membrane proteins during membrane integration.

The protein resides in the cell inner membrane. Required for the insertion and/or proper folding and/or complex formation of integral membrane proteins into the membrane. Involved in integration of membrane proteins that insert both dependently and independently of the Sec translocase complex, as well as at least some lipoproteins. Aids folding of multispanning membrane proteins. This is Membrane protein insertase YidC from Burkholderia vietnamiensis (strain G4 / LMG 22486) (Burkholderia cepacia (strain R1808)).